We begin with the raw amino-acid sequence, 233 residues long: Large ribosomal subunit protein uL1 (233 aa).

The protein belongs to the universal ribosomal protein uL1 family. In terms of assembly, part of the 50S ribosomal subunit.

In terms of biological role, binds directly to 23S rRNA. The L1 stalk is quite mobile in the ribosome, and is involved in E site tRNA release. Protein L1 is also a translational repressor protein, it controls the translation of the L11 operon by binding to its mRNA. The protein is Large ribosomal subunit protein uL1 of Vibrio parahaemolyticus serotype O3:K6 (strain RIMD 2210633).